The primary structure comprises 493 residues: MSVSTALKLCIFFTGFAGIVAEYSLATLATYLLGNAVLQWSVVISIFLLSMGLGSHASRYIPDDKTPLAFVLAELFLSLLVPFSVPIAYHFANNFLHLQTVIYGLSFVIGSLIGLEIPLAVRINNMYEELKVNISSVLEKDYLGSVPAGLLYAYLFLPKLGLPLTAILAGFFNLISAFLLVKVLKPKKFLKFLAIFTFFLLATYAVGHKRITLYEEQKFYGEEIIHFEQTPYQKIVLTRFGKHYSLYLDGHLQFSTLDEKRYHETLVHVPASFLKRYEKALILGGGDGLALRELRKYPFGEIHLVDLDPKMIEFSKKNLVMRKINENSFYDTRLKVFSEDAFNFVKKTKEKYDFVIVDLIDPRTPSSARVYSLEFYMSLKNKLKEDGIFITQAGDTFYKREVFCSILKTIKKAGFYAYPLVVYIPTFGEWGMVIGSKEPLNFENFELKEKTEFLNRERALAFYTLGKSLECPNVEVNTLLKPVLIYYYYKIQN.

A run of 7 helical transmembrane segments spans residues 9–29 (LCIFFTGFAGIVAEYSLATLA), 32–52 (LLGNAVLQWSVVISIFLLSMG), 68–88 (LAFVLAELFLSLLVPFSVPIA), 101–121 (VIYGLSFVIGSLIGLEIPLAV), 137–157 (VLEKDYLGSVPAGLLYAYLFL), 161–181 (GLPLTAILAGFFNLISAFLLV), and 188–208 (KFLKFLAIFTFFLLATYAVGH). Residues 187-448 (KKFLKFLAIF…PLNFENFELK (262 aa)) are spermidine synthase. Positions 202–437 (ATYAVGHKRI…GEWGMVIGSK (236 aa)) constitute a PABS domain. Gln-233 is a binding site for S-methyl-5'-thioadenosine. His-263 and Asp-287 together coordinate spermidine. S-methyl-5'-thioadenosine contacts are provided by residues Asp-306 and 340-341 (DA). Asp-358 (proton acceptor) is an active-site residue.

The protein belongs to the spermidine/spermine synthase family. As to quaternary structure, homodimer or homotetramer.

Its subcellular location is the cell membrane. It catalyses the reaction S-adenosyl 3-(methylsulfanyl)propylamine + putrescine = S-methyl-5'-thioadenosine + spermidine + H(+). It functions in the pathway amine and polyamine biosynthesis; spermidine biosynthesis; spermidine from putrescine: step 1/1. Its function is as follows. Catalyzes the irreversible transfer of a propylamine group from the amino donor S-adenosylmethioninamine (decarboxy-AdoMet) to putrescine (1,4-diaminobutane) to yield spermidine. The sequence is that of Polyamine aminopropyltransferase 2 from Aquifex aeolicus (strain VF5).